A 478-amino-acid chain; its full sequence is Glycogen synthase (478 aa).

Lys20 is a binding site for ADP-alpha-D-glucose.

Belongs to the glycosyltransferase 1 family. Bacterial/plant glycogen synthase subfamily.

It catalyses the reaction [(1-&gt;4)-alpha-D-glucosyl](n) + ADP-alpha-D-glucose = [(1-&gt;4)-alpha-D-glucosyl](n+1) + ADP + H(+). It functions in the pathway glycan biosynthesis; glycogen biosynthesis. Its function is as follows. Synthesizes alpha-1,4-glucan chains using ADP-glucose. This Cereibacter sphaeroides (strain ATCC 17023 / DSM 158 / JCM 6121 / CCUG 31486 / LMG 2827 / NBRC 12203 / NCIMB 8253 / ATH 2.4.1.) (Rhodobacter sphaeroides) protein is Glycogen synthase.